A 370-amino-acid chain; its full sequence is Histidinol-phosphate aminotransferase (370 aa).

At Lys222 the chain carries N6-(pyridoxal phosphate)lysine.

The protein belongs to the class-II pyridoxal-phosphate-dependent aminotransferase family. Histidinol-phosphate aminotransferase subfamily. Homodimer. Pyridoxal 5'-phosphate serves as cofactor.

It carries out the reaction L-histidinol phosphate + 2-oxoglutarate = 3-(imidazol-4-yl)-2-oxopropyl phosphate + L-glutamate. The protein operates within amino-acid biosynthesis; L-histidine biosynthesis; L-histidine from 5-phospho-alpha-D-ribose 1-diphosphate: step 7/9. This Bacillus cytotoxicus (strain DSM 22905 / CIP 110041 / 391-98 / NVH 391-98) protein is Histidinol-phosphate aminotransferase.